The sequence spans 715 residues: ATP-dependent zinc metalloprotease FtsH (715 aa).

Over 1–10 the chain is Cytoplasmic; sequence MKNKNRGFFR. A helical membrane pass occupies residues 11–31; the sequence is SSLSYAFVILAVIFLIYSFFG. Residues 32–137 lie on the Extracellular side of the membrane; the sequence is RSDGSVKHLS…KPAASNFWGS (106 aa). The chain crosses the membrane as a helical span at residues 138–158; that stretch reads MLTLILPTLIMFALLYWMLIG. Topologically, residues 159 to 715 are cytoplasmic; it reads SQRGQGGSGG…LLDAVNNKFD (557 aa). The tract at residues 167 to 187 is disordered; that stretch reads GGPGGIMSFGRSKAKPADPKQ. 233–240 lines the ATP pocket; it reads GPPGTGKT. A Zn(2+)-binding site is contributed by H455. The active site involves E456. H459 and D531 together coordinate Zn(2+).

The protein in the central section; belongs to the AAA ATPase family. This sequence in the C-terminal section; belongs to the peptidase M41 family. Homohexamer. The cofactor is Zn(2+).

The protein resides in the cell membrane. Acts as a processive, ATP-dependent zinc metallopeptidase for both cytoplasmic and membrane proteins. Plays a role in the quality control of integral membrane proteins. Its function is as follows. Can complement an E.coli ftsH disruption mutant. The protein is ATP-dependent zinc metalloprotease FtsH of Oenococcus oeni (Leuconostoc oenos).